The following is a 376-amino-acid chain: Heme-dependent oxidative N-demethylase gamma subunit (376 aa).

In terms of assembly, the heme-dependent oxidative N-demethylase (HODM) is a heterotetramer composed of a catalytic alpha subunit, a FMN/2Fe-2S-dependent oxidoreductase beta subunit, a gamma subunit with putative aminotransferase activity, and a delta subunit of unknown function.

Component of the heme-dependent oxidative N-demethylase (HODM) enzyme, that catalyzes the NADPH-dependent oxidation of dimethylamine (DMA) to methylamine (MA) and formaldehyde. Functions in bacterial methylated amine catabolism, linking alkylamine oxidation to the tetrahydrofolate C1 pool. The gamma subunit of HODM may act as an aminomethyltransferase involved in the detoxification of formaldehyde released by the alpha subunit; this process requires tetrahydrofolate (THF). In Ectopseudomonas mendocina (strain ymp) (Pseudomonas mendocina), this protein is Heme-dependent oxidative N-demethylase gamma subunit.